Here is a 226-residue protein sequence, read N- to C-terminus: Thymidylate kinase (226 aa).

12–19 (GIDGAGKS) is a binding site for ATP.

This sequence belongs to the thymidylate kinase family.

It catalyses the reaction dTMP + ATP = dTDP + ADP. Its function is as follows. Phosphorylation of dTMP to form dTDP in both de novo and salvage pathways of dTTP synthesis. The chain is Thymidylate kinase from Verminephrobacter eiseniae (strain EF01-2).